A 464-amino-acid polypeptide reads, in one-letter code: ERO1-like protein alpha (464 aa).

An N-terminal signal peptide occupies residues 1 to 23 (MGRAWGLLVGLLGVVWLLRLGHG). 8 disulfide bridges follow: Cys35/Cys48, Cys37/Cys46, Cys85/Cys387, Cys94/Cys99, Cys94/Cys130, Cys99/Cys104, Cys207/Cys237, and Cys390/Cys393. Ser106, Ser142, and Ser144 each carry phosphoserine. Positions 186, 188, and 199 each coordinate FAD. FAD is bound by residues Ser248 and His251. Asn276 is a glycosylation site (N-linked (GlcNAc...) asparagine). FAD contacts are provided by Arg283 and Arg296. A glycan (N-linked (GlcNAc...) asparagine) is linked at Asn380.

It belongs to the EROs family. As to quaternary structure, predominantly monomer. May function both as a monomer and a homodimer. Interacts with PDILT. Interacts with ERP44; the interaction results in retention of ERO1A in the endoplasmic reticulum. It depends on FAD as a cofactor. Post-translationally, N-glycosylated. The Cys-94/Cys-99 and Cys-390/Cys-393 disulfide bonds constitute the redox-active center. The Cys-94/Cys-99 disulfide bond may accept electron from P4HB and funnel them to the active site disulfide Cys-390/Cys-393. The regulatory Cys-99/Cys-104 disulfide bond stabilizes the other regulatory bond Cys-94/Cys-130. In terms of processing, phosphorylated on Ser-144 by FAM20C in the Golgi which increases its enzymatic activity. Phosphorylation is induced by lactation. It is also induced by hypoxia and reductive stress. As to expression, widely expressed (at protein level). In the mammary gland, expressed at higher levels in lactating mice than in virgin mice (at protein level).

The protein resides in the endoplasmic reticulum membrane. It localises to the golgi apparatus lumen. Its subcellular location is the secreted. The protein localises to the cell projection. It is found in the dendrite. Enzyme activity is tightly regulated to prevent the accumulation of reactive oxygen species in the endoplasmic reticulum. Reversibly down-regulated by the formation of disulfide bonds between the active site Cys-94 and Cys-130, and between Cys-99 and Cys-104. Glutathione may be required to regulate its activity in the endoplasmic reticulum. Oxidoreductase involved in disulfide bond formation in the endoplasmic reticulum. Efficiently reoxidizes P4HB/PDI, the enzyme catalyzing protein disulfide formation, in order to allow P4HB to sustain additional rounds of disulfide formation. Following P4HB reoxidation, passes its electrons to molecular oxygen via FAD, leading to the production of reactive oxygen species (ROS) in the cell. Required for the proper folding of immunoglobulins. Plays an important role in ER stress-induced, CHOP-dependent apoptosis by activating the inositol 1,4,5-trisphosphate receptor IP3R1. The sequence is that of ERO1-like protein alpha from Mus musculus (Mouse).